The following is a 177-amino-acid chain: Large ribosomal subunit protein uL6 (177 aa).

Belongs to the universal ribosomal protein uL6 family. In terms of assembly, part of the 50S ribosomal subunit.

This protein binds to the 23S rRNA, and is important in its secondary structure. It is located near the subunit interface in the base of the L7/L12 stalk, and near the tRNA binding site of the peptidyltransferase center. This is Large ribosomal subunit protein uL6 from Rhodospirillum rubrum (strain ATCC 11170 / ATH 1.1.1 / DSM 467 / LMG 4362 / NCIMB 8255 / S1).